Reading from the N-terminus, the 443-residue chain is Citrate transporter CitP (443 aa).

13 consecutive transmembrane segments (helical) span residues Ile-27–Ser-47, Ile-59–Phe-79, Leu-83–Met-103, Phe-114–Phe-134, Val-151–Gly-171, Ala-177–Leu-197, Ser-209–Ile-229, Tyr-268–Leu-288, Gly-294–Leu-314, Val-322–Gly-342, Val-350–Ile-370, Ala-388–Ala-410, and Met-422–Met-442.

Belongs to the 2-hydroxycarboxylate transporter (2-HCT) (TC 2.A.24) family.

The protein resides in the cell membrane. The enzyme catalyses (R)-lactate(in) + citrate(out) = (R)-lactate(out) + citrate(in). It catalyses the reaction (S)-lactate(in) + citrate(out) = (S)-lactate(out) + citrate(in). The catalysed reaction is citrate(in) + H(+)(in) = citrate(out) + H(+)(out). Its activity is regulated as follows. Uptake of citrate is not affected by the absence or presence of Na(+) up to 25 mM and is increasingly inhibited by increasing Mg(2+) concentrations. Secondary transporter involved in citrate metabolism. During cometabolism of citrate and glucose, catalyzes the uptake of divalent citrate into the cell coupled to the exit of monovalent lactate, a product of citrate fermentation during citrate-glucose cometabolism (precursor/product exchange). The citrate/lactate exchange is electrogenic and results in the generation of a membrane potential. In the absence of glucose, i.e. when no lactate is produced, CitP catalyzes the proton-dependent transport of citrate and malate. Transports the divalent form of citrate and malate with the concomitant uptake of one proton, therefore translocating a single unit of negative charge across the membrane. In vitro, transports a range of substrates that contain the 2-hydroxycarboxylate motif, HO-CR(2)-COO(-), with a preference for malate, citrate and monovalent 2-hydroxyisobutyrate. Modification of the OH or the COO(-) groups of the 2-hydroxycarboxylate motif drastically reduces the affinity of the transporter for the substrates, indicating their relevance in substrate recognition. Significant activity is also observed with some 2-oxocarboxylates and a 3-hydroxycarboxylate. In Leuconostoc mesenteroides subsp. mesenteroides, this protein is Citrate transporter CitP.